The sequence spans 317 residues: MARKKIALIGGGQIGGVLAQLCALRELGDVVLFDIVEGLPQGKCLDIAEASPVDGFDVCLKGTNSYEDIAGADVVIVTAGLPRKPGMSRDDLIEVNSKIMTSVAEGIKQYAPNSFVIVISNPLDAMVTLCQKVTGFPYNRVIGQAGVLDSARFATFIAWELGVSVKDVTAMTLGGHGDDMVPLVRYASVKGIPVMELLERKYGSKEKAKEVMDAMVNRTRLAGGEVVALLKTGSAFYSPASSAIAMAESILKDQKRVLPTCAYLQGEFGVNGYYVGVPCVLGEKGIENIIEFSLDAEEQAMMDKSVAAVKSLVDSLK.

Residues 10–15 (GGGQIG) and D34 each bind NAD(+). Substrate-binding residues include R83 and R89. NAD(+) is bound by residues N96 and 119–121 (ISN). Residues N121 and R152 each contribute to the substrate site. H176 (proton acceptor) is an active-site residue.

The protein belongs to the LDH/MDH superfamily. MDH type 3 family.

It catalyses the reaction (S)-malate + NAD(+) = oxaloacetate + NADH + H(+). Functionally, catalyzes the reversible oxidation of malate to oxaloacetate. In Geobacter sulfurreducens (strain ATCC 51573 / DSM 12127 / PCA), this protein is Malate dehydrogenase.